Here is a 451-residue protein sequence, read N- to C-terminus: Chromosomal replication initiator protein DnaA (451 aa).

Residues 1-71 (MSEKEIWDKV…QAIIYDVIGY (71 aa)) are domain I, interacts with DnaA modulators. Positions 71–112 (YEVKPHFISEDELASYNNVNTQEVQEPQVQHSSIDDKTWGKE) are domain II. A domain III, AAA+ region region spans residues 113 to 329 (QFNMHNTFDT…GALTRLLAYS (217 aa)). ATP-binding residues include glycine 157, glycine 159, lysine 160, and threonine 161. Positions 330–451 (KLQGKPITTE…ENLEKEIRNQ (122 aa)) are domain IV, binds dsDNA.

It belongs to the DnaA family. As to quaternary structure, oligomerizes as a right-handed, spiral filament on DNA at oriC.

Its subcellular location is the cytoplasm. Plays an essential role in the initiation and regulation of chromosomal replication. ATP-DnaA binds to the origin of replication (oriC) to initiate formation of the DNA replication initiation complex once per cell cycle. Binds the DnaA box (a 9 base pair repeat at the origin) and separates the double-stranded (ds)DNA. Forms a right-handed helical filament on oriC DNA; dsDNA binds to the exterior of the filament while single-stranded (ss)DNA is stabiized in the filament's interior. The ATP-DnaA-oriC complex binds and stabilizes one strand of the AT-rich DNA unwinding element (DUE), permitting loading of DNA polymerase. After initiation quickly degrades to an ADP-DnaA complex that is not apt for DNA replication. Binds acidic phospholipids. The sequence is that of Chromosomal replication initiator protein DnaA from Staphylococcus epidermidis (strain ATCC 35984 / DSM 28319 / BCRC 17069 / CCUG 31568 / BM 3577 / RP62A).